Here is a 318-residue protein sequence, read N- to C-terminus: Deoxyribose-phosphate aldolase (318 aa).

The active-site Proton donor/acceptor is the Asp155. The active-site Schiff-base intermediate with acetaldehyde is the Lys218. The active-site Proton donor/acceptor is Lys254.

It belongs to the DeoC/FbaB aldolase family. DeoC type 2 subfamily. In terms of assembly, interacts with YBX1. In terms of tissue distribution, mainly expressed in liver, lung and colon.

It is found in the cytoplasm. It localises to the cytoplasmic granule. Its subcellular location is the nucleus. The enzyme catalyses 2-deoxy-D-ribose 5-phosphate = D-glyceraldehyde 3-phosphate + acetaldehyde. Its pathway is carbohydrate degradation; 2-deoxy-D-ribose 1-phosphate degradation; D-glyceraldehyde 3-phosphate and acetaldehyde from 2-deoxy-alpha-D-ribose 1-phosphate: step 2/2. Functionally, catalyzes a reversible aldol reaction between acetaldehyde and D-glyceraldehyde 3-phosphate to generate 2-deoxy-D-ribose 5-phosphate. Participates in stress granule (SG) assembly. May allow ATP production from extracellular deoxyinosine in conditions of energy deprivation. The chain is Deoxyribose-phosphate aldolase (DERA) from Homo sapiens (Human).